The sequence spans 437 residues: GTPase Der (437 aa).

EngA-type G domains follow at residues 4-167 and 176-351; these read PVIA…PEDE and IRIS…ENHN. GTP is bound by residues 10–17, 57–61, 119–122, 182–189, 229–233, and 294–297; these read GRPNVGKS, DTGGI, NKID, DTAGM, and NKWD. Residues 352 to 436 enclose the KH-like domain; the sequence is LRVPTHVLND…PIKIIARKKN (85 aa).

Belongs to the TRAFAC class TrmE-Era-EngA-EngB-Septin-like GTPase superfamily. EngA (Der) GTPase family. As to quaternary structure, associates with the 50S ribosomal subunit.

Its function is as follows. GTPase that plays an essential role in the late steps of ribosome biogenesis. The protein is GTPase Der of Halalkalibacterium halodurans (strain ATCC BAA-125 / DSM 18197 / FERM 7344 / JCM 9153 / C-125) (Bacillus halodurans).